The chain runs to 156 residues: MPRKGHVERREVLPDPVYNSKKVSKLINKVMWDGKKSLAQKICYGAFDIIREKTGRDPLEVFEEALNNVMPVLEVRPRRVGGATYQVPVEVRPERRLSLGIRWLVEYARQRSGKSMMEKLAAEIMDAANNTGGSVKKKEDTHKMAEANKAFAHYRW.

This sequence belongs to the universal ribosomal protein uS7 family. In terms of assembly, part of the 30S ribosomal subunit. Contacts proteins S9 and S11.

One of the primary rRNA binding proteins, it binds directly to 16S rRNA where it nucleates assembly of the head domain of the 30S subunit. Is located at the subunit interface close to the decoding center, probably blocks exit of the E-site tRNA. This Thermoanaerobacter pseudethanolicus (strain ATCC 33223 / 39E) (Clostridium thermohydrosulfuricum) protein is Small ribosomal subunit protein uS7.